Reading from the N-terminus, the 410-residue chain is Sorting nexin-4 (410 aa).

A PX domain is found at 11 to 135; the sequence is FIIVSDPQKQ…TFLVSSDWDA (125 aa). 4 residues coordinate a 1,2-diacyl-sn-glycero-3-phospho-(1D-myo-inositol-3-phosphate): R58, S60, K84, and R101. Residues 329–368 are a coiled coil; the sequence is NQEAARREKISKLESKVQALTTEVENAKKVADAFEKEALK.

Belongs to the sorting nexin family.

The protein localises to the cytoplasm. It is found in the cytosol. The protein resides in the preautophagosomal structure membrane. Its subcellular location is the endosome membrane. In terms of biological role, sorting nexin, involved in the separation or division of vacuoles throughout the entire life cycle of the cells. Involved in retrieval of late-Golgi SNAREs from post-Golgi endosomes to the trans-Golgi network, for cytoplasm to vacuole transport (Cvt), and autophagy of large cargos including mitophagy, pexophagy and glycophagy. The sequence is that of Sorting nexin-4 (SNX4) from Eremothecium gossypii (strain ATCC 10895 / CBS 109.51 / FGSC 9923 / NRRL Y-1056) (Yeast).